A 193-amino-acid polypeptide reads, in one-letter code: Probable DNA-directed RNA polymerase subunit delta (193 aa).

One can recognise an HTH HARE-type domain in the interval leucine 14–tryptophan 83. Acidic residues-rich tracts occupy residues glutamate 119–asparagine 133 and tyrosine 143–aspartate 193. The segment at glutamate 119–aspartate 193 is disordered.

It belongs to the RpoE family. In terms of assembly, RNAP is composed of a core of 2 alpha, a beta and a beta' subunits. The core is associated with a delta subunit and one of several sigma factors.

Its function is as follows. Participates in both the initiation and recycling phases of transcription. In the presence of the delta subunit, RNAP displays an increased specificity of transcription, a decreased affinity for nucleic acids, and an increased efficiency of RNA synthesis because of enhanced recycling. The sequence is that of Probable DNA-directed RNA polymerase subunit delta from Streptococcus thermophilus (strain CNRZ 1066).